The primary structure comprises 176 residues: ATP synthase subunit b (176 aa).

A helical transmembrane segment spans residues 18–38 (GVEWGTVIVTVITFAILLALL).

It belongs to the ATPase B chain family. In terms of assembly, F-type ATPases have 2 components, F(1) - the catalytic core - and F(0) - the membrane proton channel. F(1) has five subunits: alpha(3), beta(3), gamma(1), delta(1), epsilon(1). F(0) has three main subunits: a(1), b(2) and c(10-14). The alpha and beta chains form an alternating ring which encloses part of the gamma chain. F(1) is attached to F(0) by a central stalk formed by the gamma and epsilon chains, while a peripheral stalk is formed by the delta and b chains.

It localises to the cell membrane. Functionally, f(1)F(0) ATP synthase produces ATP from ADP in the presence of a proton or sodium gradient. F-type ATPases consist of two structural domains, F(1) containing the extramembraneous catalytic core and F(0) containing the membrane proton channel, linked together by a central stalk and a peripheral stalk. During catalysis, ATP synthesis in the catalytic domain of F(1) is coupled via a rotary mechanism of the central stalk subunits to proton translocation. Component of the F(0) channel, it forms part of the peripheral stalk, linking F(1) to F(0). This is ATP synthase subunit b from Staphylococcus haemolyticus (strain JCSC1435).